The following is a 359-amino-acid chain: MTLYDRALKLMFLLPPERIHGIISGALQTLHLATPVNRVMEKAVRVHDPVLRQTVFGVDFPAPLGLAAGFDKNAEAIDSWGAIGFGYAEMGTVTPKSQPGNPTPRLFRLPEDKAILNRMGFNNKGALVVADNLRARRSRDVVGINIGKNKTSEDAVADYRATSTLLGQLADYLVVNVSSPNTPGLRDLQAVEELRPILEVVKKSTTTPVLVKIAPDLSDEDIDAVADLAVELELAGIVATNTTISRSGLKTPASKVEKMGAGGISGAPLENRSLEVLKRLHERVGDKLVLVSVGGISTPEQAWERITAGASLLQGYTPFIYGGLGWIRGIHRGIAAQIKAHGLDSIEQAVGSGLEWKAL.

Residues 68 to 72 and T92 contribute to the FMN site; that span reads AGFDK. K72 lines the substrate pocket. Substrate is bound at residue 117-121; that stretch reads NRMGF. N145 and N176 together coordinate FMN. N176 contributes to the substrate binding site. S179 (nucleophile) is an active-site residue. N181 is a binding site for substrate. FMN is bound by residues K212 and T240. 241 to 242 lines the substrate pocket; the sequence is NT. FMN contacts are provided by residues G266, G295, and 316-317; that span reads YT.

The protein belongs to the dihydroorotate dehydrogenase family. Type 2 subfamily. As to quaternary structure, monomer. Requires FMN as cofactor.

The protein localises to the cell membrane. It catalyses the reaction (S)-dihydroorotate + a quinone = orotate + a quinol. The protein operates within pyrimidine metabolism; UMP biosynthesis via de novo pathway; orotate from (S)-dihydroorotate (quinone route): step 1/1. Its function is as follows. Catalyzes the conversion of dihydroorotate to orotate with quinone as electron acceptor. In Corynebacterium striatum, this protein is Dihydroorotate dehydrogenase (quinone).